A 578-amino-acid chain; its full sequence is PX domain-containing protein kinase-like protein (578 aa).

One can recognise a PX domain in the interval 14 to 126; the sequence is LDDTVPLTAA…KFLDPNNYSA (113 aa). The Protein kinase domain occupies 88–481; the sequence is FIAERQKGLQ…LENSEEHSAK (394 aa). 2 stretches are compositionally biased toward basic residues: residues 437–448 and 457–469; these read IHQHRRLTRAQS and KKRK…KSKR. Disordered regions lie at residues 437-548 and 559-578; these read IHQH…NGMS and FQKG…PKIG. The span at 483 to 513 shows a compositional bias: low complexity; it reads SNSNNSAGSGASSPLTSPSSPTPPSTSGISA. Over residues 514 to 530 the composition is skewed to pro residues; it reads LPPPPPPPPPPAAPLPP. A WH2 domain is found at 548 to 567; sequence SRGALLSSIQNFQKGTLRKA. A compositionally biased stretch (basic and acidic residues) spans 568-578; sequence KTCDHSAPKIG.

This sequence belongs to the protein kinase superfamily. As to expression, widely expressed in all tissues examined except in heart. Isoform 1 is expressed in high levels in the brain, skeletal muscle, spleen and testis. Isoform 7 expression has yet to be demonstrated.

The protein resides in the cytoplasm. Its subcellular location is the cell membrane. Its function is as follows. Binds to and modulates brain Na,K-ATPase subunits ATP1B1 and ATP1B3 and may thereby participate in the regulation of electrical excitability and synaptic transmission. May not display kinase activity. This chain is PX domain-containing protein kinase-like protein, found in Homo sapiens (Human).